A 28-amino-acid polypeptide reads, in one-letter code: GVFCGEACAQASCSIAGCECIAGLCYKN.

Intrachain disulfides connect cysteine 4–cysteine 18, cysteine 8–cysteine 20, and cysteine 13–cysteine 25.

This is a cyclic peptide. In terms of processing, contains 3 disulfide bonds.

In terms of biological role, probably participates in a plant defense mechanism. The chain is Cyclotide vodo I1 from Viola odorata (Sweet violet).